A 906-amino-acid polypeptide reads, in one-letter code: DNA gyrase subunit A (906 aa).

A Topo IIA-type catalytic domain is found at 35 to 524 (IPDVRDGLKP…GEFDQDIEDL (490 aa)). The O-(5'-phospho-DNA)-tyrosine intermediate role is filled by Tyr-123. The short motif at 551–557 (QKRGGKG) is the GyrA-box element. The segment at 886–906 (SESEEDSELEEDLEQAEEVYT) is disordered.

It belongs to the type II topoisomerase GyrA/ParC subunit family. As to quaternary structure, heterotetramer, composed of two GyrA and two GyrB chains. In the heterotetramer, GyrA contains the active site tyrosine that forms a transient covalent intermediate with DNA, while GyrB binds cofactors and catalyzes ATP hydrolysis.

Its subcellular location is the cytoplasm. The enzyme catalyses ATP-dependent breakage, passage and rejoining of double-stranded DNA.. A type II topoisomerase that negatively supercoils closed circular double-stranded (ds) DNA in an ATP-dependent manner to modulate DNA topology and maintain chromosomes in an underwound state. Negative supercoiling favors strand separation, and DNA replication, transcription, recombination and repair, all of which involve strand separation. Also able to catalyze the interconversion of other topological isomers of dsDNA rings, including catenanes and knotted rings. Type II topoisomerases break and join 2 DNA strands simultaneously in an ATP-dependent manner. The protein is DNA gyrase subunit A of Rickettsia felis (strain ATCC VR-1525 / URRWXCal2) (Rickettsia azadi).